Here is a 1410-residue protein sequence, read N- to C-terminus: ABC transporter C family member 13 (1410 aa).

8 consecutive transmembrane segments (helical) span residues 23-43 (IVLG…LTIT), 60-80 (LLYV…VLLV), 88-108 (VILC…ILSL), 122-142 (ILCF…NMIF), 148-168 (QEIC…VLRI), 391-411 (LSGL…SVLI), 474-494 (VFFW…LFAL), and 505-525 (FTCL…PWVI). The region spanning 255 to 530 (CNNYSTPSLI…FPWVINGLID (276 aa)) is the ABC transmembrane type-1 1 domain. The region spanning 564-791 (VCVEDASCTW…ISPTFSLTNE (228 aa)) is the ABC transporter 1 domain. 602-609 (GEVGSGKT) provides a ligand contact to ATP. 6 helical membrane passes run 844 to 864 (AVFS…LMQG), 889 to 909 (TSFY…LTLV), 963 to 985 (SLPF…IVVL), 990 to 1009 (VLFL…LQVF), 1087 to 1107 (IVLF…PISF), and 1111 to 1131 (GLVG…GSLL). Residues 852–1139 (TIVILVSAVL…LLTSFTETEK (288 aa)) enclose the ABC transmembrane type-1 2 domain. The 234-residue stretch at 1174–1407 (VEFHNVTMRY…DSSTFSSFVR (234 aa)) folds into the ABC transporter 2 domain. 1208 to 1215 (GRTGAGKS) contributes to the ATP binding site.

Belongs to the ABC transporter superfamily. ABCC family. Conjugate transporter (TC 3.A.1.208) subfamily. Ubiquitous.

The protein localises to the membrane. The enzyme catalyses ATP + H2O + xenobioticSide 1 = ADP + phosphate + xenobioticSide 2.. Functionally, pump for glutathione S-conjugates. In Arabidopsis thaliana (Mouse-ear cress), this protein is ABC transporter C family member 13 (ABCC13).